The chain runs to 500 residues: NF-kappa-B inhibitor cactus (500 aa).

The span at 1–43 (MPSPTKAAEAATKATATSDCSCSAASVEQRAPSNAANPSSSLA) shows a compositional bias: low complexity. 2 disordered regions span residues 1–148 (MPSP…MRLK) and 171–212 (LNNL…APPS). Phosphoserine; by PKC is present on Ser-45. Positions 69–86 (NETSDSGFISGPQSSQIF) are enriched in polar residues. Over residues 118–130 (IIDEEEDQEEQEK) the composition is skewed to acidic residues. A Phosphoserine; by PKC modification is found at Ser-144. Residues 171-189 (LNNLGQSSSTQITGRSKVQ) are compositionally biased toward polar residues. At Thr-183 the chain carries Phosphothreonine; by PKC. Residues 190–212 (SSTASTANANPSGSGATSSAPPS) are compositionally biased toward low complexity. 5 ANK repeats span residues 229–261 (DGDTPLHLACISGSVDVVAALIRMAPHPCLLNI), 265–294 (VAQTPLHLAALTAQPNIMRILLLAGAEPTV), 298–327 (HGNTALHLSCIAGEKQCVRALTEKFGATEI), 361–390 (DGERCVHLAAEAGHIDILRILVSHGADINA), and 395–424 (SGRTPLHIAIEGCNEDLANFLLDECEKLNL). Phosphothreonine; by PKC is present on residues Thr-293 and Thr-319. At Ser-395 the chain carries Phosphoserine; by PKC.

It belongs to the NF-kappa-B inhibitor family. Phosphorylated isoform A binds to dorsal (dl); inhibits dl translocation to the nucleus and therefore from binding to DNA. In vitro, interacts with IKKbeta. Interacts with cactin and kappa-B-Ras. Activated IKKbeta phosphorylates cact. As to expression, expressed in ovary (at protein level).

Its subcellular location is the cytoplasm. Its function is as follows. Involved in the formation of the dorsoventral pattern. It inhibits nuclear translocation of the dorsal morphogen in the dorsal region of the embryo. Acts as a negative regulator of the NF-kappa-B (rel) signaling pathway. Cact is degraded by IKKbeta, this is essential for NF-kappa-B (rel) activation. The chain is NF-kappa-B inhibitor cactus (cact) from Drosophila melanogaster (Fruit fly).